The chain runs to 1187 residues: Protein CHROMATIN REMODELING 8 (1187 aa).

The interval 1-55 is disordered; the sequence is MEEDEDQFLLSSLGVTSANPEDLEQKILDEATKKPDNDEGGSVEEKSTQLEGTNL. The span at 9–19 shows a compositional bias: polar residues; it reads LLSSLGVTSAN. A compositionally biased stretch (basic and acidic residues) spans 23-48; the sequence is LEQKILDEATKKPDNDEGGSVEEKST. A coiled-coil region spans residues 110 to 170; sequence LQHALATDRL…LKRKLKEIRK (61 aa). The Nuclear localization signal 1 motif lies at 162 to 169; that stretch reads KRKLKEIR. 2 disordered regions span residues 223 to 247 and 273 to 343; these read GFERRLQQPGPSNSRNLPEGDDENE and DAED…DGRR. Short sequence motifs (nuclear localization signal) lie at residues 290–297 and 310–317; these read LRKLYKTP and GKKSKKTR. Basic residues predominate over residues 305 to 328; the sequence is KKRKAGKKSKKTRPLPEKKWRKRI. The region spanning 397–594 is the Helicase ATP-binding domain; it reads WELHCQRAGG…WSLFDFVFPG (198 aa). Position 410–417 (410–417) interacts with ATP; it reads DEMGLGKT. The tract at residues 467-501 is disordered; sequence SAQDSGHGKGQGKASESDYDSESSVDSDHEPKSKN. The segment covering 492-501 has biased composition (basic and acidic residues); it reads DSDHEPKSKN. The short motif at 545–548 is the DEGH box element; that stretch reads DEGH. The Helicase C-terminal domain maps to 730–890; that stretch reads KVVAEVLKVW…RRFFKARDMK (161 aa). The stretch at 987 to 1016 forms a coiled coil; that stretch reads NANDEEEKMRLEHQASQVAQRAAEALRQSR. The span at 1050–1059 shows a compositional bias: polar residues; it reads VNSRLTQTGD. Residues 1050–1075 form a disordered region; it reads VNSRLTQTGDKPSAIKNGISAGLSSG.

The protein belongs to the SNF2/RAD54 helicase family. As to quaternary structure, homodimer. Binds DNA.

Its subcellular location is the nucleus. Functionally, essential factor involved in transcription-coupled nucleotide excision repair (TCR) which allows RNA polymerase II-blocking lesions to be rapidly removed from the transcribed strand of active genes. Upon DNA-binding, it locally modifies DNA conformation by wrapping the DNA around itself, thereby modifying the interface between stalled RNA polymerase II and DNA. It is required for transcription-coupled repair complex formation. This Arabidopsis thaliana (Mouse-ear cress) protein is Protein CHROMATIN REMODELING 8.